The primary structure comprises 211 residues: 3-demethoxyubiquinol 3-hydroxylase (211 aa).

Fe cation-binding residues include glutamate 60, glutamate 90, histidine 93, glutamate 142, glutamate 174, and histidine 177.

The protein belongs to the COQ7 family. Fe cation serves as cofactor.

It localises to the cell membrane. It carries out the reaction a 5-methoxy-2-methyl-3-(all-trans-polyprenyl)benzene-1,4-diol + AH2 + O2 = a 3-demethylubiquinol + A + H2O. Its pathway is cofactor biosynthesis; ubiquinone biosynthesis. Functionally, catalyzes the hydroxylation of 2-nonaprenyl-3-methyl-6-methoxy-1,4-benzoquinol during ubiquinone biosynthesis. This chain is 3-demethoxyubiquinol 3-hydroxylase, found in Francisella tularensis subsp. tularensis (strain FSC 198).